Consider the following 200-residue polypeptide: Peroxiredoxin (200 aa).

Positions 6 to 166 (ARIGHLAPGF…ILRLVQAFQF (161 aa)) constitute a Thioredoxin domain. Catalysis depends on Cys-52, which acts as the Cysteine sulfenic acid (-SOH) intermediate.

This sequence belongs to the peroxiredoxin family. AhpC/Prx1 subfamily. In terms of assembly, homodimer; disulfide-linked, upon oxidation.

The enzyme catalyses a hydroperoxide + [thioredoxin]-dithiol = an alcohol + [thioredoxin]-disulfide + H2O. Thiol-specific peroxidase that catalyzes the reduction of hydrogen peroxide and organic hydroperoxides to water and alcohols, respectively. Plays a role in cell protection against oxidative stress by detoxifying peroxides and as sensor of hydrogen peroxide-mediated signaling events. The protein is Peroxiredoxin of Oncorhynchus mykiss (Rainbow trout).